Consider the following 194-residue polypeptide: Histone H1.0 (194 aa).

M1 carries the N-acetylmethionine modification. The segment covering 1 to 11 (MTENSTSTPAA) has biased composition (low complexity). The tract at residues 1–29 (MTENSTSTPAAKPKRAKASKKSTDHPKYS) is disordered. Position 2 is an N-acetylthreonine; in Histone H1.0, N-terminally processed (T2). One can recognise an H15 domain in the interval 24-97 (DHPKYSDMIV…GASGSFRLAK (74 aa)). R42 is modified (citrulline). Residues 83–194 (QTKGVGASGS…SSAKRTGKKK (112 aa)) are disordered. S104 bears the ADP-ribosylserine mark. The span at 105–194 (VAFKKTKKEV…SSAKRTGKKK (90 aa)) shows a compositional bias: basic residues.

Belongs to the histone H1/H5 family. Post-translationally, ADP-ribosylated on Ser-104 in response to DNA damage.

It localises to the nucleus. Its subcellular location is the chromosome. Histones H1 are necessary for the condensation of nucleosome chains into higher-order structures. The histones H1.0 are found in cells that are in terminal stages of differentiation or that have low rates of cell division. The protein is Histone H1.0 (H1-0) of Bos taurus (Bovine).